We begin with the raw amino-acid sequence, 156 residues long: Acyl carrier protein, mitochondrial (156 aa).

The transit peptide at 1–68 (MASRVLCACV…GTVTHLCRQY (68 aa)) directs the protein to the mitochondrion. The Carrier domain occupies 77 to 152 (DGIKDRVLYV…EIVDYIADKK (76 aa)). Lys-88 carries the N6-acetyllysine modification. O-(pantetheine 4'-phosphoryl)serine is present on Ser-112.

This sequence belongs to the acyl carrier protein (ACP) family. In terms of assembly, mammalian complex I is composed of 45 different subunits. Interacts with ETFRF1. Identified in a complex composed of MALSU1, MIEF1 upstream open reading frame protein and NDUFAB1; within the trimeric complex, MIEF1 upstream open reading frame protein functions as a bridging scaffold that interacts with MALSU1 on one side, and with NDUFAB1 on the other side. The complex interacts with the mitochondrial large ribosomal subunit. Interacts with alpha-1-microglobulin chain; this interaction is required for the maintenance of mitochondrial redox homeostasis. Component of the mitochondrial core iron-sulfur cluster (ISC) complex composed of NFS1, LYRM4, NDUFAB1, ISCU, FXN, and FDX2; this complex is a heterohexamer containing two copies of each monomer. Component of the cyteine desulfurase complex composed of NFS1, LYRM4 and NDUFAB1; this complex contributes to the stability and cysteine desulfurase activity of NFS1. Phosphopantetheinylation at Ser-112 is essential for interactions with LYR motif-containing proteins.

The protein resides in the mitochondrion. Carrier of the growing fatty acid chain in fatty acid biosynthesis. Accessory and non-catalytic subunit of the mitochondrial membrane respiratory chain NADH dehydrogenase (Complex I), which functions in the transfer of electrons from NADH to the respiratory chain. Accessory protein, of the core iron-sulfur cluster (ISC) assembly complex, that regulates, in association with LYRM4, the stability and the cysteine desulfurase activity of NFS1 and participates in the [2Fe-2S] clusters assembly on the scaffolding protein ISCU. The core iron-sulfur cluster (ISC) assembly complex is involved in the de novo synthesis of a [2Fe-2S] cluster, the first step of the mitochondrial iron-sulfur protein biogenesis. This process is initiated by the cysteine desulfurase complex (NFS1:LYRM4:NDUFAB1) that produces persulfide which is delivered on the scaffold protein ISCU in a FXN-dependent manner. Then this complex is stabilized by FDX2 which provides reducing equivalents to accomplish the [2Fe-2S] cluster assembly. Finally, the [2Fe-2S] cluster is transferred from ISCU to chaperone proteins, including HSCB, HSPA9 and GLRX5. In Mus musculus (Mouse), this protein is Acyl carrier protein, mitochondrial.